Consider the following 428-residue polypeptide: Tryptophan synthase beta chain (428 aa).

K100 is modified (N6-(pyridoxal phosphate)lysine).

Belongs to the TrpB family. In terms of assembly, tetramer of two alpha and two beta chains. Requires pyridoxal 5'-phosphate as cofactor.

The catalysed reaction is (1S,2R)-1-C-(indol-3-yl)glycerol 3-phosphate + L-serine = D-glyceraldehyde 3-phosphate + L-tryptophan + H2O. Its pathway is amino-acid biosynthesis; L-tryptophan biosynthesis; L-tryptophan from chorismate: step 5/5. Its function is as follows. The beta subunit is responsible for the synthesis of L-tryptophan from indole and L-serine. The sequence is that of Tryptophan synthase beta chain from Streptomyces griseus subsp. griseus (strain JCM 4626 / CBS 651.72 / NBRC 13350 / KCC S-0626 / ISP 5235).